Consider the following 81-residue polypeptide: Acyl carrier protein (81 aa).

Positions 2–80 (ASKEEILAGL…DAVDFIDGAQ (79 aa)) constitute a Carrier domain. The residue at position 40 (serine 40) is an O-(pantetheine 4'-phosphoryl)serine.

It belongs to the acyl carrier protein (ACP) family. In terms of processing, 4'-phosphopantetheine is transferred from CoA to a specific serine of apo-ACP by AcpS. This modification is essential for activity because fatty acids are bound in thioester linkage to the sulfhydryl of the prosthetic group.

It is found in the cytoplasm. It participates in lipid metabolism; fatty acid biosynthesis. Functionally, carrier of the growing fatty acid chain in fatty acid biosynthesis. This chain is Acyl carrier protein, found in Micrococcus luteus (strain ATCC 4698 / DSM 20030 / JCM 1464 / CCM 169 / CCUG 5858 / IAM 1056 / NBRC 3333 / NCIMB 9278 / NCTC 2665 / VKM Ac-2230) (Micrococcus lysodeikticus).